Consider the following 641-residue polypeptide: Probable ATP-dependent helicase YpvA (641 aa).

The Helicase ATP-binding domain occupies 29–303 (YDILPEKGFD…EFAELIEDAL (275 aa)). 64–71 (AGVGTGKT) contributes to the ATP binding site. The [4Fe-4S] cluster site is built by cysteine 133, cysteine 197, cysteine 200, and cysteine 206. The DEGH box signature appears at 257–260 (DEGH).

Belongs to the helicase family. DinG subfamily. [4Fe-4S] cluster serves as cofactor.

It catalyses the reaction Couples ATP hydrolysis with the unwinding of duplex DNA at the replication fork by translocating in the 5'-3' direction. This creates two antiparallel DNA single strands (ssDNA). The leading ssDNA polymer is the template for DNA polymerase III holoenzyme which synthesizes a continuous strand.. It carries out the reaction ATP + H2O = ADP + phosphate + H(+). Its function is as follows. Might be a 5'-3' DNA helicase. This is Probable ATP-dependent helicase YpvA (ypvA) from Bacillus subtilis (strain 168).